The primary structure comprises 336 residues: Aspartate--ammonia ligase (336 aa).

The protein belongs to the class-II aminoacyl-tRNA synthetase family. AsnA subfamily.

It localises to the cytoplasm. The catalysed reaction is L-aspartate + NH4(+) + ATP = L-asparagine + AMP + diphosphate + H(+). The protein operates within amino-acid biosynthesis; L-asparagine biosynthesis; L-asparagine from L-aspartate (ammonia route): step 1/1. The polypeptide is Aspartate--ammonia ligase (Clostridium perfringens (strain SM101 / Type A)).